Consider the following 463-residue polypeptide: Phosphoglucosamine mutase (463 aa).

The active-site Phosphoserine intermediate is serine 110. Mg(2+) contacts are provided by serine 110, aspartate 255, aspartate 257, and aspartate 259. Serine 110 is modified (phosphoserine).

The protein belongs to the phosphohexose mutase family. It depends on Mg(2+) as a cofactor. Activated by phosphorylation.

The enzyme catalyses alpha-D-glucosamine 1-phosphate = D-glucosamine 6-phosphate. Catalyzes the conversion of glucosamine-6-phosphate to glucosamine-1-phosphate. The polypeptide is Phosphoglucosamine mutase (Koribacter versatilis (strain Ellin345)).